A 129-amino-acid chain; its full sequence is Small ribosomal subunit protein uS11 (129 aa).

It belongs to the universal ribosomal protein uS11 family. As to quaternary structure, part of the 30S ribosomal subunit. Interacts with proteins S7 and S18. Binds to IF-3.

In terms of biological role, located on the platform of the 30S subunit, it bridges several disparate RNA helices of the 16S rRNA. Forms part of the Shine-Dalgarno cleft in the 70S ribosome. This chain is Small ribosomal subunit protein uS11, found in Allorhizobium ampelinum (strain ATCC BAA-846 / DSM 112012 / S4) (Agrobacterium vitis (strain S4)).